The sequence spans 517 residues: Acetyl-coenzyme A carboxylase carboxyl transferase subunit beta, chloroplastic (517 aa).

Basic and acidic residues-rich tracts occupy residues 1–17, 24–41, 48–65, and 72–81; these read MKPT…KSNE, GDNK…KSNE, and GDKQKDKKDG. Disordered stretches follow at residues 1-179 and 204-234; these read MKPT…KEEE and KHRD…DSEA. Residues 87–131 are compositionally biased toward acidic residues; sequence YDDEYEEDLEYDDEYEEDLEYDDEYEEDLEYDDEEYDDEYEEDLE. Composition is skewed to basic and acidic residues over residues 132–179 and 209–229; these read GDNK…KEEE and KSVP…RDTD. Positions 243–514 constitute a CoA carboxyltransferase N-terminal domain; the sequence is LWVHCKLCSG…NSQVINIYNY (272 aa). 4 residues coordinate Zn(2+): C247, C250, C266, and C269. The C4-type zinc-finger motif lies at 247-269; it reads CKLCSGFNYKKILKSKNNVCEQC.

The protein belongs to the AccD/PCCB family. In terms of assembly, acetyl-CoA carboxylase is a heterohexamer composed of biotin carboxyl carrier protein, biotin carboxylase and 2 subunits each of ACCase subunit alpha and ACCase plastid-coded subunit beta (accD). Zn(2+) serves as cofactor.

The protein localises to the plastid. The protein resides in the chloroplast stroma. The enzyme catalyses N(6)-carboxybiotinyl-L-lysyl-[protein] + acetyl-CoA = N(6)-biotinyl-L-lysyl-[protein] + malonyl-CoA. Its pathway is lipid metabolism; malonyl-CoA biosynthesis; malonyl-CoA from acetyl-CoA: step 1/1. In terms of biological role, component of the acetyl coenzyme A carboxylase (ACC) complex. Biotin carboxylase (BC) catalyzes the carboxylation of biotin on its carrier protein (BCCP) and then the CO(2) group is transferred by the transcarboxylase to acetyl-CoA to form malonyl-CoA. The sequence is that of Acetyl-coenzyme A carboxylase carboxyl transferase subunit beta, chloroplastic from Oenothera elata subsp. hookeri (Hooker's evening primrose).